Reading from the N-terminus, the 253-residue chain is UPF0246 protein lhv_1883 (253 aa).

The protein belongs to the UPF0246 family.

The sequence is that of UPF0246 protein lhv_1883 from Lactobacillus helveticus (strain DPC 4571).